Consider the following 210-residue polypeptide: Na(+)-translocating NADH-quinone reductase subunit D (210 aa).

6 helical membrane passes run 10-30 (VLFG…GVCS), 42-62 (LVMS…ISMI), 72-92 (IIVQ…ILKA), 103-123 (VFVG…AFAM), 143-163 (FVLI…ILGF), and 178-198 (NGLL…IWFI).

Belongs to the NqrDE/RnfAE family. As to quaternary structure, composed of six subunits; NqrA, NqrB, NqrC, NqrD, NqrE and NqrF.

It is found in the cell inner membrane. The enzyme catalyses a ubiquinone + n Na(+)(in) + NADH + H(+) = a ubiquinol + n Na(+)(out) + NAD(+). Its function is as follows. NQR complex catalyzes the reduction of ubiquinone-1 to ubiquinol by two successive reactions, coupled with the transport of Na(+) ions from the cytoplasm to the periplasm. NqrA to NqrE are probably involved in the second step, the conversion of ubisemiquinone to ubiquinol. This is Na(+)-translocating NADH-quinone reductase subunit D from Pseudoalteromonas atlantica (strain T6c / ATCC BAA-1087).